We begin with the raw amino-acid sequence, 97 residues long: ESAT-6-like protein EsxS (97 aa).

This sequence belongs to the WXG100 family. CFP-10 subfamily. As to quaternary structure, forms a tight complex with EsxR. Exists in heterodimeric and heterotetrameric forms.

It is found in the secreted. The chain is ESAT-6-like protein EsxS from Mycobacterium tuberculosis (strain ATCC 25618 / H37Rv).